The chain runs to 544 residues: Nucleosome assembly protein 1-like 3 (544 aa).

2 disordered regions span residues 1–109 (MAEA…LFLD) and 168–345 (PTEE…KKED). A compositionally biased stretch (low complexity) spans 35 to 83 (SNSSSSTNSCSSSGSSSSGSSSSSSSSSSSSSSSSSSSSGSSGSSSNGS). Acidic residues predominate over residues 168–192 (PTEEECEWNSEEEFSGDEEMQDDTP). Basic and acidic residues-rich tracts occupy residues 207–228 (CNEK…PEAK), 235–277 (PKET…KADS), and 314–332 (PARE…EGVN).

It belongs to the nucleosome assembly protein (NAP) family. In terms of tissue distribution, expressed in brain.

The protein localises to the nucleus. It localises to the cytoplasm. This Mus musculus (Mouse) protein is Nucleosome assembly protein 1-like 3 (Nap1l3).